A 349-amino-acid chain; its full sequence is tRNA-specific 2-thiouridylase MnmA (349 aa).

Residues 6 to 13 (LLSGGVDS) and Met32 contribute to the ATP site. The active-site Nucleophile is the Cys103. Cys103 and Cys195 are joined by a disulfide. Gly127 is an ATP binding site. The segment at 145–147 (KDQ) is interaction with tRNA. The active-site Cysteine persulfide intermediate is Cys195.

The protein belongs to the MnmA/TRMU family.

It is found in the cytoplasm. It catalyses the reaction S-sulfanyl-L-cysteinyl-[protein] + uridine(34) in tRNA + AH2 + ATP = 2-thiouridine(34) in tRNA + L-cysteinyl-[protein] + A + AMP + diphosphate + H(+). Catalyzes the 2-thiolation of uridine at the wobble position (U34) of tRNA, leading to the formation of s(2)U34. The polypeptide is tRNA-specific 2-thiouridylase MnmA (Pseudothermotoga lettingae (strain ATCC BAA-301 / DSM 14385 / NBRC 107922 / TMO) (Thermotoga lettingae)).